The following is an 824-amino-acid chain: Leucine--tRNA ligase (824 aa).

Residues 42 to 52 carry the 'HIGH' region motif; sequence PYPSGRIHMGH. A 'KMSKS' region motif is present at residues 581-585; that stretch reads KMSKS. Lys584 is an ATP binding site.

Belongs to the class-I aminoacyl-tRNA synthetase family.

It localises to the cytoplasm. It catalyses the reaction tRNA(Leu) + L-leucine + ATP = L-leucyl-tRNA(Leu) + AMP + diphosphate. The polypeptide is Leucine--tRNA ligase (Geobacter metallireducens (strain ATCC 53774 / DSM 7210 / GS-15)).